A 527-amino-acid polypeptide reads, in one-letter code: Palmitoleoyl-protein carboxylesterase NOTUM (527 aa).

The first 19 residues, 1–19, serve as a signal peptide directing secretion; the sequence is MKSYLILNTLLLSLLKING. Residues N64, N86, and N104 are each glycosylated (N-linked (GlcNAc...) asparagine). The Charge relay system role is filled by S203. N-linked (GlcNAc...) asparagine glycosylation occurs at N249. Catalysis depends on charge relay system residues D311 and H359. N-linked (GlcNAc...) asparagine glycosylation occurs at N451.

It belongs to the pectinacetylesterase family. Notum subfamily. In terms of tissue distribution, expressed in the anterior pole.

It localises to the secreted. It catalyses the reaction [Wnt protein]-O-(9Z)-hexadecenoyl-L-serine + H2O = [Wnt protein]-L-serine + (9Z)-hexadecenoate + H(+). Its function is as follows. Carboxylesterase that acts as a key negative regulator of the Wnt signaling pathway. Acts by specifically mediating depalmitoleoylation of WNT proteins. Serine palmitoleoylation of WNT proteins is required for efficient binding to frizzled receptors. Promotes head regeneration following amputation by inhibiting the Wnt signaling pathway. This is Palmitoleoyl-protein carboxylesterase NOTUM from Schmidtea mediterranea (Freshwater planarian flatworm).